An 861-amino-acid polypeptide reads, in one-letter code: MKLSILEAAALTAASVASAQDDLAYSPPYYPSPWADGHGEWSNAYKRAVDIVSQMTLTEKVNLTTGTGWELERCVGQTGSVPRLGIPSLCLQDSPLGIRMSDYNSAFPAGINVAATWDKTLAYQRGKAMGEEFSDKGIDVQLGPAAGPLGRSPDGGRNWEGFSPDPALTGVLFAETIKGIQDAGVIATAKHYILNEQEHFRQVGEAQGYGFNITETVSSNVDDKTMHELYLWPFADAVRAGVGAVMCSYNQINNSYGCQNSLTLNKLLKAELGFQGFVMSDWSAHHSGVGAALAGLDMSMPGDISFDSGTSFYGTNLTVGVLNGTIPQWRVDDMAVRIMAAYYKVGRDRLWTPPNFSSWTRDEYGFAHFFPSEGAYERVNEFVNVQRDHAQVIRRIGADSVVLLKNDGALPLTGQEKTVGILGEDAGSNPKGANGCSDRGCDKGTLAMAWGSGTANFPYLVTPEQAIQNEVLKGRGNVFAVTDNYDTQQIAAVASQSTVSLVFVNADAGEGYLNVDGNMGDRKNLTLWQNGEEVIKTVTEHCNNTVVVIHSVGPVLIDEWYAHPNVTGILWAGLPGQESGNAIADVLYGRVNPGGKTPFTWGKTRASYGDYLLTEPNNGNGAPQDNFNEGVFIDYRRFDKYNETPIYEFGHGLSYTTFELSGLQVQLINGSSYVPTTGQTSAAQTFGKVEDASSYLYPEGLKRISKFIYPWLNSTDLKASTGDPDYGEPNFEYIPEGATDGSPQPRLPASGGPGGNPGLYEDLFQVSVTITNTGKVAGDEVPQLYVSLGGPNEPKRVLRKFERLHLAPGQQKVWTTTLNRRDLANWDVVAQDWKITPYAKTIFVGTSSRKLPLAGRLPRVQ.

Residues 1-19 form the signal peptide; that stretch reads MKLSILEAAALTAASVASA. 3 N-linked (GlcNAc...) asparagine glycosylation sites follow: Asn62, Asn212, and Asn253. Asp281 is an active-site residue. Asn316, Asn323, Asn355, Asn524, Asn543, Asn565, Asn669, and Asn713 each carry an N-linked (GlcNAc...) asparagine glycan. Residues 735-754 form a disordered region; it reads PEGATDGSPQPRLPASGGPG.

The protein belongs to the glycosyl hydrolase 3 family.

The protein resides in the secreted. The catalysed reaction is Hydrolysis of terminal, non-reducing beta-D-glucosyl residues with release of beta-D-glucose.. It functions in the pathway glycan metabolism; cellulose degradation. Its function is as follows. Beta-glucosidases are one of a number of cellulolytic enzymes involved in the degradation of cellulosic biomass. Catalyzes the last step releasing glucose from the inhibitory cellobiose. The sequence is that of Probable beta-glucosidase A (bglA) from Aspergillus terreus.